The following is a 365-amino-acid chain: Alternative oxidase 2, mitochondrial (365 aa).

Low complexity predominate over residues 32 to 46; the sequence is TPPHSTTTTSPSSPA. The interval 32–52 is disordered; the sequence is TPPHSTTTTSPSSPAFHQPNH. 3 residues coordinate Fe cation: glutamate 166, glutamate 205, and histidine 208. The helical transmembrane segment at 220 to 242 threads the bilayer; the sequence is WFTRSIIYVGQGVFTNVFFLLYL. The Fe cation site is built by glutamate 256, glutamate 257, glutamate 312, and histidine 315. Residues 345 to 365 form a disordered region; it reads QPNHGINVMRPTGWEKQDLQL.

The protein belongs to the alternative oxidase family. Requires Fe cation as cofactor.

The protein localises to the mitochondrion inner membrane. Its function is as follows. Catalyzes cyanide-resistant oxygen consumption. May increase respiration when the cytochrome respiratory pathway is restricted, or in response to low temperatures. This Candida albicans (Yeast) protein is Alternative oxidase 2, mitochondrial (AOX2).